Consider the following 922-residue polypeptide: Probable outer membrane protein pmp1 (922 aa).

The signal sequence occupies residues 1 to 26 (MRFSLCGFPLVFSFTLLSVFDTSLSA). The Autotransporter domain occupies 620 to 922 (SLQTDRGLWI…NINCGSKFRF (303 aa)).

Belongs to the PMP outer membrane protein family.

It is found in the secreted. The protein resides in the cell wall. It localises to the cell outer membrane. The sequence is that of Probable outer membrane protein pmp1 (pmp1) from Chlamydia pneumoniae (Chlamydophila pneumoniae).